A 511-amino-acid chain; its full sequence is Cytochrome P450 monooxygenase prhD (511 aa).

A glycan (N-linked (GlcNAc...) asparagine) is linked at Asn7. Residues 10 to 30 (GNGMGLLIPLGLSWLIWTILL) form a helical membrane-spanning segment. Position 444 (Cys444) interacts with heme. A glycan (N-linked (GlcNAc...) asparagine) is linked at Asn502.

Belongs to the cytochrome P450 family. Heme serves as cofactor.

The protein resides in the membrane. Its pathway is secondary metabolite biosynthesis; terpenoid biosynthesis. Functionally, cytochrome P450 monooxygenase; part of the gene cluster that mediates the biosynthesis of paraherquonin, a meroterpenoid with a unique, highly congested hexacyclic molecular architecture. The first step of the pathway is the synthesis of 3,5-dimethylorsellinic acid (DMOA) by the polyketide synthase prhL. Synthesis of DMOA is followed by farnesylation by the prenyltransferase prhE, methylesterification by the methyl-transferase prhM, epoxidation of the prenyl chain by the flavin-dependent monooxygenase prhF, and cyclization of the farnesyl moiety by the terpene cyclase prhH, to yield the tetracyclic intermediate, protoaustinoid A. The short chain dehydrogenase prhI then oxidizes the C-3 alcohol group of the terpene cyclase product to transform protoaustinoid A into protoaustinoid B. The FAD-binding monooxygenase prhJ catalyzes the oxidation of protoaustinoid B into preaustinoid A which is further oxidized into preaustinoid A1 by FAD-binding monooxygenase phrK. Finally, prhA leads to berkeleydione via the berkeleyone B intermediate. PrhA is a multifunctional dioxygenase that first desaturates at C5-C6 to form berkeleyone B, followed by rearrangement of the A/B-ring to form the cycloheptadiene moiety in berkeleydione. Berkeleydione serves as the key intermediate for the biosynthesis of paraherquonin as well as many other meroterpenoids. The cytochrome P450 monooxygenases prhB, prhD, and prhN, as well as the isomerase prhC, are probably involved in the late stage of paraherquonin biosynthesis, after the production of berkeleydione. Especially prhC might be a multifunctional enzyme that catalyzes the D-ring expansion via intramolecular methoxy rearrangement, as well as the hydrolysis of the expanded D-ring. The chain is Cytochrome P450 monooxygenase prhD from Penicillium brasilianum.